A 338-amino-acid polypeptide reads, in one-letter code: Glyceraldehyde-3-phosphate dehydrogenase (338 aa).

NAD(+) is bound by residues Arg12–Ile13, Asp34, and Arg79. D-glyceraldehyde 3-phosphate is bound by residues Ser150 to Thr152, Thr181, Thr210 to Gly211, and Arg233. Cys151 acts as the Nucleophile in catalysis. Asn316 contacts NAD(+).

It belongs to the glyceraldehyde-3-phosphate dehydrogenase family. In terms of assembly, homotetramer.

The protein resides in the cytoplasm. It carries out the reaction D-glyceraldehyde 3-phosphate + phosphate + NAD(+) = (2R)-3-phospho-glyceroyl phosphate + NADH + H(+). It functions in the pathway carbohydrate degradation; glycolysis; pyruvate from D-glyceraldehyde 3-phosphate: step 1/5. The polypeptide is Glyceraldehyde-3-phosphate dehydrogenase (GPD) (Yarrowia lipolytica (strain CLIB 122 / E 150) (Yeast)).